The sequence spans 457 residues: MVRLYNTLTKKKELFIPIDKDHVKMYVCGPTVYDTAHIGNARSVVVYDVLFQLLKFCYGKVTYVRNITDIDDKIINAASEKNSNIESITTYYIKAFHDDMESINCKKPTYEPKATENVDYIIKLIEHLLQSGHAYESDKHVYFNIESYHEYGALSGKKTDELVPGSRVEVNENKKHPGDFVLWKPANDIDYKLSSYWNSPWGEGRPGWHIECSAMSYAYLGKDFDIHGGGIDLQFPHHENEIAQSKSAFAGSMFAKYWMHNGFLTVNEEKMSKSLFNIVKVRDLLDSGIKGEVIRYALLKTHYRKPLDWTENVISDAQETLNKFYRLSRGLDTINIDESNAEISKDFIDALKNDLNIPEALAILHEMAAKINKMSNESEKLKLTESFVKSARFIGLLESSYQEWFTAGVSHQEIERLIDLRRAAKQNKDYNTADKIRDQLKQIGVTISDNEDGTTTW.

Cys28 is a Zn(2+) binding site. A 'HIGH' region motif is present at residues Pro30 to Asn40. Residues Cys212, His237, and Glu241 each coordinate Zn(2+). Residues Lys270–Ser274 carry the 'KMSKS' region motif. Lys273 serves as a coordination point for ATP.

It belongs to the class-I aminoacyl-tRNA synthetase family. Monomer. The cofactor is Zn(2+).

The protein resides in the cytoplasm. It catalyses the reaction tRNA(Cys) + L-cysteine + ATP = L-cysteinyl-tRNA(Cys) + AMP + diphosphate. This chain is Cysteine--tRNA ligase, found in Wolbachia sp. subsp. Drosophila simulans (strain wRi).